The primary structure comprises 129 residues: Cytochrome c3 (129 aa).

A signal peptide spans 1-22 (MRKLFFCGVLALAVAFALPVVA). Heme c-binding residues include H44, H47, C52, C55, H56, H57, C68, C73, H74, H92, C101, C104, H105, C122, C127, and H128.

Binds 4 heme c groups per subunit.

The protein resides in the periplasm. Functionally, participates in sulfate respiration coupled with phosphorylation by transferring electrons from the enzyme dehydrogenase to ferredoxin. The protein is Cytochrome c3 of Nitratidesulfovibrio vulgaris (strain ATCC 29579 / DSM 644 / CCUG 34227 / NCIMB 8303 / VKM B-1760 / Hildenborough) (Desulfovibrio vulgaris).